A 164-amino-acid polypeptide reads, in one-letter code: 6,7-dimethyl-8-ribityllumazine synthase (164 aa).

5-amino-6-(D-ribitylamino)uracil-binding positions include Tyr30, 61 to 63 (ALE), and 85 to 87 (CVI). A (2S)-2-hydroxy-3-oxobutyl phosphate-binding site is contributed by 90 to 91 (ET). His93 acts as the Proton donor in catalysis. Asn118 contacts 5-amino-6-(D-ribitylamino)uracil. Arg132 serves as a coordination point for (2S)-2-hydroxy-3-oxobutyl phosphate.

Belongs to the DMRL synthase family.

It catalyses the reaction (2S)-2-hydroxy-3-oxobutyl phosphate + 5-amino-6-(D-ribitylamino)uracil = 6,7-dimethyl-8-(1-D-ribityl)lumazine + phosphate + 2 H2O + H(+). The protein operates within cofactor biosynthesis; riboflavin biosynthesis; riboflavin from 2-hydroxy-3-oxobutyl phosphate and 5-amino-6-(D-ribitylamino)uracil: step 1/2. In terms of biological role, catalyzes the formation of 6,7-dimethyl-8-ribityllumazine by condensation of 5-amino-6-(D-ribitylamino)uracil with 3,4-dihydroxy-2-butanone 4-phosphate. This is the penultimate step in the biosynthesis of riboflavin. The protein is 6,7-dimethyl-8-ribityllumazine synthase of Methylobacterium radiotolerans (strain ATCC 27329 / DSM 1819 / JCM 2831 / NBRC 15690 / NCIMB 10815 / 0-1).